The chain runs to 87 residues: Large ribosomal subunit protein eL34 (87 aa).

This sequence belongs to the eukaryotic ribosomal protein eL34 family.

The chain is Large ribosomal subunit protein eL34 from Sulfurisphaera tokodaii (strain DSM 16993 / JCM 10545 / NBRC 100140 / 7) (Sulfolobus tokodaii).